The following is a 242-amino-acid chain: Uridylate kinase (242 aa).

K12–G15 contacts ATP. Residues G20–G25 form an involved in allosteric activation by GTP region. G54 contacts UMP. ATP contacts are provided by G55 and R59. UMP is bound by residues D74 and T135–T142. 3 residues coordinate ATP: T162, Y168, and D171.

This sequence belongs to the UMP kinase family. In terms of assembly, homohexamer.

Its subcellular location is the cytoplasm. The enzyme catalyses UMP + ATP = UDP + ADP. Its pathway is pyrimidine metabolism; CTP biosynthesis via de novo pathway; UDP from UMP (UMPK route): step 1/1. Allosterically activated by GTP. Inhibited by UTP. Functionally, catalyzes the reversible phosphorylation of UMP to UDP. This chain is Uridylate kinase, found in Pasteurella multocida (strain Pm70).